The primary structure comprises 141 residues: VLSPEDKNNVKAAWSKVGGQAGDYGAEALERMFLSFPTTKTYFPHFDLSHGSAQVKGHGKKVGEALTTAVNHMDDLPGALSTLSDLHAYKLRVDPVNFKLLSHCLLVTLACHNPGEFTPAVHASLDKFLASVSTVLTSKYR.

The 141-residue stretch at 1–141 (VLSPEDKNNV…VSTVLTSKYR (141 aa)) folds into the Globin domain. Histidine 58 contributes to the O2 binding site. Residue histidine 87 coordinates heme b.

This sequence belongs to the globin family. As to quaternary structure, heterotetramer of two alpha chains and two beta chains. In terms of tissue distribution, red blood cells.

Involved in oxygen transport from the lung to the various peripheral tissues. The sequence is that of Hemoglobin subunit alpha-1 from Tadarida brasiliensis (Brazilian free-tailed bat).